A 585-amino-acid chain; its full sequence is Probable ubiquitin carboxyl-terminal hydrolase 9 (585 aa).

The interval 1–23 is disordered; it reads MSLLRWMGMNSPGSTDRRKSTWE. Positions 41 to 424 constitute a USP domain; that stretch reads YGLTNYGNTC…TAYVLFYTAA (384 aa). Cys-50 functions as the Nucleophile in the catalytic mechanism. Positions 85 to 110 are disordered; it reads CTKTNHPESSSSRHSKKKSMENRKSS. Catalysis depends on His-375, which acts as the Proton acceptor. The span at 447–470 shows a compositional bias: polar residues; the sequence is SQLKQESVEVSNLSSTPRSNSTIT. Residues 447-473 form a disordered region; it reads SQLKQESVEVSNLSSTPRSNSTITYPD. Ser-505 carries the post-translational modification Phosphoserine. Disordered stretches follow at residues 511 to 530 and 540 to 585; these read FHSR…SRSF and KFFG…RSKR. Residues 542–551 show a composition bias toward polar residues; sequence FGSSQSNSPK. Ser-549 carries the phosphoserine modification. Over residues 553-570 the composition is skewed to basic and acidic residues; that stretch reads SPLRDTHKSSDEHSESKH. Residues 574–585 are compositionally biased toward polar residues; sequence LPWQFSRSRSKR.

The protein belongs to the peptidase C19 family. In terms of assembly, interacts with bun107 and bun62.

The protein resides in the nucleus. The protein localises to the cytoplasm. It is found in the cell tip. It catalyses the reaction Thiol-dependent hydrolysis of ester, thioester, amide, peptide and isopeptide bonds formed by the C-terminal Gly of ubiquitin (a 76-residue protein attached to proteins as an intracellular targeting signal).. Ubiquitin C-terminal hydrolase involved in regulating actin dynamics and/or endocytosis at cell tips and septa. The polypeptide is Probable ubiquitin carboxyl-terminal hydrolase 9 (ubp9) (Schizosaccharomyces pombe (strain 972 / ATCC 24843) (Fission yeast)).